The chain runs to 70 residues: Movement protein TGBp3 (70 aa).

The Lumenal portion of the chain corresponds to 1–4; sequence MEVN. A helical membrane pass occupies residues 5-27; it reads TYLNAIILVLVVTIIAVISTSLV. Over 28–70 the chain is Cytoplasmic; it reads RTEPCVIKITGESITVLACKLDAETIKAIADLKPLSVERLSFH.

Belongs to the Tymovirales TGBp3 protein family.

Its subcellular location is the host endoplasmic reticulum membrane. In terms of biological role, plays a role in viral cell-to-cell propagation, by facilitating genome transport to neighboring plant cells through plasmosdesmata. May induce the formation of granular vesicles derived from the endoplasmic reticulum, which align on actin filaments. The chain is Movement protein TGBp3 from Brassica campestris (Field mustard).